The following is a 377-amino-acid chain: Glutamate 5-kinase (377 aa).

Position 20 (lysine 20) interacts with ATP. The substrate site is built by serine 59, aspartate 146, and asparagine 158. ATP contacts are provided by residues serine 178–aspartate 179 and threonine 220–lysine 226. The 79-residue stretch at arginine 285–arginine 363 folds into the PUA domain.

It belongs to the glutamate 5-kinase family.

The protein resides in the cytoplasm. It catalyses the reaction L-glutamate + ATP = L-glutamyl 5-phosphate + ADP. It participates in amino-acid biosynthesis; L-proline biosynthesis; L-glutamate 5-semialdehyde from L-glutamate: step 1/2. Catalyzes the transfer of a phosphate group to glutamate to form L-glutamate 5-phosphate. The sequence is that of Glutamate 5-kinase from Myxococcus xanthus (strain DK1622).